A 562-amino-acid polypeptide reads, in one-letter code: Transmembrane E3 ubiquitin-protein ligase FLY1 (562 aa).

Residues 1-32 (MKKREHLGLGFFEWQIILWLSIWLAISQQALG) form the signal peptide. The Lumenal portion of the chain corresponds to 33–262 (LRPIREKPRS…TSVNVEVYYN (230 aa)). The chain crosses the membrane as a helical span at residues 263–283 (KAVNYTLMVTFVSFLQVLLLI). The Cytoplasmic segment spans residues 284-297 (RQMEHGNTQSGAAK). Residues 298-318 (VSIVMIGQQAIMDAYLCLLHL) traverse the membrane as a helical segment. The Lumenal segment spans residues 319 to 321 (TAG). A helical membrane pass occupies residues 322 to 342 (ILVESLFNAFATAAFFKFVVF). At 343–373 (SIFEMRYLLAIWKATRPSNSGEGWETMRREL) the chain is on the cytoplasmic side. The helical transmembrane segment at 374–394 (SFLYSRFYGILLGGILIMYQF) threads the bilayer. Topologically, residues 395-397 (HNY) are lumenal. Residues 398-418 (MQPILLLMYSFWIPQIVANVV) form a helical membrane-spanning segment. The Cytoplasmic segment spans residues 419–426 (RDSRKPLH). The chain crosses the membrane as a helical span at residues 427-447 (PYYILGMTATRLAIPLYVFGC). The Lumenal segment spans residues 448 to 458 (PHNFMRVEPNK). Residues 459–479 (VWCICLCTFMGLQAVILLLQH) traverse the membrane as a helical segment. Residues 480 to 562 (YFGSRCFVPR…PTCRRSLPPA (83 aa)) are Cytoplasmic-facing. The RING-type; atypical zinc-finger motif lies at 512–556 (CVICMTAIDLRQHTSDCMVTPCEHFFHSGCLQRWMDIKMECPTCR).

Highly expressed in stems. Expressed in root xylem and seed coat.

It is found in the endomembrane system. It carries out the reaction S-ubiquitinyl-[E2 ubiquitin-conjugating enzyme]-L-cysteine + [acceptor protein]-L-lysine = [E2 ubiquitin-conjugating enzyme]-L-cysteine + N(6)-ubiquitinyl-[acceptor protein]-L-lysine.. It participates in protein modification; protein ubiquitination. Its function is as follows. E3 ubiquitin-protein ligase that regulates the degree of methylesterification of pectin in seed mucilage. May be involved in the recycling of pectin methylesterase enzymes in the endomembrane system of seed coat epidermal cells. Possesses E3 ubiquitin-protein ligase activity in vitro when associated with the E1 enzyme UBA1 and the E2 enzyme UBC8. May be involved in xylem development. In Arabidopsis thaliana (Mouse-ear cress), this protein is Transmembrane E3 ubiquitin-protein ligase FLY1.